We begin with the raw amino-acid sequence, 62 residues long: uncharacterized protein (62 aa).

2 consecutive transmembrane segments (helical) span residues 9-29 and 42-62; these read HNEL…ALIG and AAVV…LQLL.

The protein resides in the membrane. This is an uncharacterized protein from Saccharomyces cerevisiae (strain ATCC 204508 / S288c) (Baker's yeast).